The primary structure comprises 124 residues: Con-Ins Tx1 (124 aa).

Positions 1-24 (MTTSSYFLLVALGLLLYVFQSSFG) are cleaved as a signal peptide. Intrachain disulfides connect Cys29–Cys107, Cys41–Cys110, Cys53–Cys123, and Cys109–Cys114. A 4-hydroxyproline; partial modification is found at Pro34. The propeptide at 59–92 (EQGGANNARANTGRTSSLMKRRGFLSLLKKRGKR) is c peptide. Glu118 is modified (4-carboxyglutamate; partial).

The protein belongs to the insulin family. In terms of assembly, heterodimer of A and B chains; disulfide-linked. In terms of tissue distribution, expressed by the venom gland.

It localises to the secreted. Functionally, this venom insulin facilitates prey capture by rapidly inducing hypoglycemic shock. Intraperitoneal injection of this peptide into zebrafish lowers blood glucose with the same potency than human insulin. In vivo, when applied to water, this peptide reduces overall locomotor activity of zebrafish larvae, observed as a significant decrease in the percentage of time spent swimming and movement frequency. In Conus textile (Cloth-of-gold cone), this protein is Con-Ins Tx1.